A 208-amino-acid chain; its full sequence is Putative archaetidylserine decarboxylase proenzyme (208 aa).

Catalysis depends on S172, which acts as the Schiff-base intermediate with substrate; via pyruvic acid. A Pyruvic acid (Ser); by autocatalysis modification is found at S172.

The protein belongs to the phosphatidylserine decarboxylase family. PSD-A subfamily. In terms of assembly, heterodimer of a large membrane-associated beta subunit and a small pyruvoyl-containing alpha subunit. Pyruvate serves as cofactor. Post-translationally, is synthesized initially as an inactive proenzyme. Formation of the active enzyme involves a self-maturation process in which the active site pyruvoyl group is generated from an internal serine residue via an autocatalytic post-translational modification. Two non-identical subunits are generated from the proenzyme in this reaction, and the pyruvate is formed at the N-terminus of the alpha chain, which is derived from the carboxyl end of the proenzyme. The post-translation cleavage follows an unusual pathway, termed non-hydrolytic serinolysis, in which the side chain hydroxyl group of the serine supplies its oxygen atom to form the C-terminus of the beta chain, while the remainder of the serine residue undergoes an oxidative deamination to produce ammonia and the pyruvoyl prosthetic group on the alpha chain.

Its subcellular location is the cell membrane. It carries out the reaction archaetidylserine + H(+) = archaetidylethanolamine + CO2. In terms of biological role, catalyzes the formation of archaetidylethanolamine (PtdEtn) from archaetidylserine (PtdSer). The sequence is that of Putative archaetidylserine decarboxylase proenzyme from Methanosarcina mazei (strain ATCC BAA-159 / DSM 3647 / Goe1 / Go1 / JCM 11833 / OCM 88) (Methanosarcina frisia).